The following is a 92-amino-acid chain: uncharacterized protein (92 aa).

The first 23 residues, methionine 1 to alanine 23, serve as a signal peptide directing secretion.

This is an uncharacterized protein from Acheta domesticus (House cricket).